We begin with the raw amino-acid sequence, 385 residues long: WD repeat-containing protein 74 (385 aa).

6 WD repeats span residues 40 to 80 (RREE…FQGQ), 83 to 122 (CPGG…ASSD), 128 to 168 (RVGP…EPLF), 179 to 220 (DLRV…RRPV), 224 to 266 (TYGE…GCLK), and 267 to 306 (GLAG…GLEH). Serine 214 bears the Phosphoserine mark. N6-methyllysine is present on lysine 311. The segment at 320–385 (SGRDNWEDEP…KKKRPGSTSS (66 aa)) is required for nucleolar and nuclear location. Residues 323–385 (DNWEDEPQEP…KKKRPGSTSS (63 aa)) are disordered. A compositionally biased stretch (basic residues) spans 372 to 385 (ARRRKKKRPGSTSS).

Isoform 1 interacts (through WDR repeats) with NVL; the interaction is independent of RNA or pre-60S ribosome particles. Isoform 2 does not interact with NVL. Interacts with MTREX; the interaction dissociation in a late stage of rRNA synthesis is required for appropriate maturation of pre-60S particles and depends on the ATPase activity of NVL.

It localises to the nucleus. Its subcellular location is the nucleolus. Regulatory protein of the MTREX-exosome complex involved in the synthesis of the 60S ribosomal subunit. Participates in an early cleavage of the pre-rRNA processing pathway in cooperation with NVL. The polypeptide is WD repeat-containing protein 74 (WDR74) (Bos taurus (Bovine)).